The sequence spans 296 residues: Antisense-enhancing sequence 1 (296 aa).

Glu47 is an active-site residue.

It belongs to the PhzF family.

May have isomerase activity. Enhances target gene silencing when coexpressed with antisense RNA. This Schizosaccharomyces pombe (strain 972 / ATCC 24843) (Fission yeast) protein is Antisense-enhancing sequence 1 (aes1).